We begin with the raw amino-acid sequence, 235 residues long: Isoprenyl transferase (235 aa).

The active site involves Asp21. A Mg(2+)-binding site is contributed by Asp21. Residues 22-25, Trp26, Lys34, His38, and 66-68 each bind substrate; these read GNAR and SSE. Asn69 functions as the Proton acceptor in the catalytic mechanism. Substrate is bound by residues Trp70, Arg72, Arg183, and 189–191; that span reads RIS. Glu202 is a binding site for Mg(2+).

Belongs to the UPP synthase family. In terms of assembly, homodimer. Requires Mg(2+) as cofactor.

Catalyzes the condensation of isopentenyl diphosphate (IPP) with allylic pyrophosphates generating different type of terpenoids. In Rickettsia felis (strain ATCC VR-1525 / URRWXCal2) (Rickettsia azadi), this protein is Isoprenyl transferase.